We begin with the raw amino-acid sequence, 498 residues long: ATP synthase subunit beta, chloroplastic (498 aa).

172-179 is an ATP binding site; that stretch reads GGAGVGKT.

This sequence belongs to the ATPase alpha/beta chains family. F-type ATPases have 2 components, CF(1) - the catalytic core - and CF(0) - the membrane proton channel. CF(1) has five subunits: alpha(3), beta(3), gamma(1), delta(1), epsilon(1). CF(0) has four main subunits: a(1), b(1), b'(1) and c(9-12).

Its subcellular location is the plastid. It is found in the chloroplast thylakoid membrane. It carries out the reaction ATP + H2O + 4 H(+)(in) = ADP + phosphate + 5 H(+)(out). Its function is as follows. Produces ATP from ADP in the presence of a proton gradient across the membrane. The catalytic sites are hosted primarily by the beta subunits. This is ATP synthase subunit beta, chloroplastic from Oenothera biennis (German evening primrose).